The following is an 842-amino-acid chain: Cullin-8 (842 aa).

Residues 1-50 are required for interaction with MMS1; that stretch reads MINESVSKREGFHESISRETSASNALGLYNKFNDERNPRYRTMIAELHEF. Over residues 755-765 the composition is skewed to polar residues; sequence LQSSNTGGERT. A disordered region spans residues 755 to 775; sequence LQSSNTGGERTSSAHHEGSNS. Lys791 is covalently cross-linked (Glycyl lysine isopeptide (Lys-Gly) (interchain with G-Cter in NEDD8)).

Belongs to the cullin family. As to quaternary structure, component of multiple cullin-RING ligases (CRLs) composed of 4 subunits: the RING protein HRT1, the cullin RTT101, a linker protein MMS1, and one of many alternative substrate receptors belonging to a protein family described as DCAF (DDB1- and CUL4-associated factor). Component of a RTT101(MMS1-MMS22) complex with the substrate receptor MMS22. This complex further interacts with RTT107 and CTF4 to form RTT101-MMS1-MMS22-RTT107 and RTT101-MMS1-MMS22-CTF4 complexes respectively. Component of a RTT101(MSS1-CRT10) complex with the substrate receptor CRT10. Component of a RTT101(MSS1-ESC2) complex with the potential substrate receptor ESC2. Component of a RTT101(MSS1-ORC5) complex with the potential substrate receptor ORC5. Interacts (via C-ter) with HRT1; required for ubiquitin-ligase activity. Interacts (via N-ter) with MMS1. In terms of processing, neddylated. HRT1-binding is necessary for RUB1/NEDD8 modification of RTT101. The modification enhances ubiquitin-ligase activity.

Its subcellular location is the cytoplasm. It localises to the nucleus. The protein operates within protein modification; protein ubiquitination. In terms of biological role, core component of multiple cullin-RING-based E3 ubiquitin-protein ligase complexes (CRLs), which mediate the ubiquitination of target proteins. As a scaffold protein may contribute to catalysis through positioning of the substrate and the ubiquitin-conjugating enzyme. The CRL associates with CDC34 as the E2 ubiquitin-conjugating enzyme. The functional specificity of the CRL depends on the type of the associated substrate receptor protein. RTT101(MMS1-MMS22) promotes fork progression through damaged DNA or natural pause sites by stabilizing replication proteins like the replication fork-pausing complex (FPC) and leading-strand polymerase at stalled replication forks. RTT101(MMS1-MMS22) ubiquitinates the acetylated histones H3K56ac-H4 at lysine residues H3K121, H3K122 and H3K125. Ubiquitination is required for efficient histone deposition during replication-coupled nucleosome assembly, probably by facilitating the transfer of H3-H4 from ASF1 to other chaperones involved in histone deposition. RTT101(MMS1-CRT10) may regulate nucleotide synthesis through transcriptional regulation of ribonucleotide reductase. RTT101(MMS1) is also involved in the non-functional rRNA decay (NRD) of 25S rRNA through the selective, ubiquitination-dependent degradation of nonfunctional ribosomal particles. Ubiquitinates the FACT (facilitates chromatin transcription) complex subunit SPT16 in an MMS1-independent manner. Involved in regulation of Ty1 transposition and protects the genome from Ty1 integration upstream of tRNA genes. The chain is Cullin-8 (RTT101) from Saccharomyces cerevisiae (strain ATCC 204508 / S288c) (Baker's yeast).